A 452-amino-acid polypeptide reads, in one-letter code: MGRRYFGTDGIRGKVGDAPITPDFVLRLGYAAGKVLASAPGRAASGARPTVLIGKDTRVSGYMLEAALEAGFSAAGVDVMLAGPMPTPGVAYLTRALRLSAGVVISASHNPYHDNGIKFFSADGNKLPDEIEAEIEAWLDKPLDCAASDGLGKARRLDDAAGRYIEFCKSTFPAAFDLRGMKLVVDCAHGAAYQVAPHVFHELGADVIPIGVAPNGFNINDGVGATAPDALMRAVRANHADLGIALDGDADRLLVVDHTGRLYNGDELLYVLVKDRIATNGQVEGAVGTLMTNFAVEVALKEAGVQFVRAAVGDRYVLEQLRERGWQLGAEGSGHILSLDRHSTGDGIVSALLVLAALKRSGKTLAQMLEGVTLFPQKLINVRMKPGADWKGSEAIRRAIDSAEQALSGSGRVLIRASGTEPVLRVMVEARQATDANRHAEAIADAVKQATA.

Serine 108 acts as the Phosphoserine intermediate in catalysis. Residues serine 108, aspartate 247, aspartate 249, and aspartate 251 each contribute to the Mg(2+) site. Serine 108 bears the Phosphoserine mark.

It belongs to the phosphohexose mutase family. It depends on Mg(2+) as a cofactor. In terms of processing, activated by phosphorylation.

It carries out the reaction alpha-D-glucosamine 1-phosphate = D-glucosamine 6-phosphate. Its function is as follows. Catalyzes the conversion of glucosamine-6-phosphate to glucosamine-1-phosphate. In Burkholderia mallei (strain NCTC 10247), this protein is Phosphoglucosamine mutase.